The sequence spans 132 residues: Small ribosomal subunit protein uS8 (132 aa).

Belongs to the universal ribosomal protein uS8 family. Part of the 30S ribosomal subunit. Contacts proteins S5 and S12.

Functionally, one of the primary rRNA binding proteins, it binds directly to 16S rRNA central domain where it helps coordinate assembly of the platform of the 30S subunit. This is Small ribosomal subunit protein uS8 from Rickettsia conorii (strain ATCC VR-613 / Malish 7).